A 129-amino-acid polypeptide reads, in one-letter code: Small ribosomal subunit protein uS9 (129 aa).

This sequence belongs to the universal ribosomal protein uS9 family.

The protein is Small ribosomal subunit protein uS9 of Helicobacter pylori (strain HPAG1).